We begin with the raw amino-acid sequence, 182 residues long: UPF0397 protein BT9727_2423 (182 aa).

The next 5 helical transmembrane spans lie at 9 to 29 (VVAI…GFSI), 40 to 60 (AILT…IGLI), 71 to 91 (WGIW…MGFI), 114 to 134 (ITGL…DIIV), and 142 to 162 (IVIQ…VLGL).

Belongs to the UPF0397 family.

It localises to the cell membrane. The chain is UPF0397 protein BT9727_2423 from Bacillus thuringiensis subsp. konkukian (strain 97-27).